The chain runs to 372 residues: Ligninase LG3 (372 aa).

Positions 1–21 are cleaved as a signal peptide; the sequence is MAFKQLFAAISLALSLSAANA. Residues 22–28 constitute a propeptide that is removed on maturation; sequence AAVIEKR. Disulfide bonds link Cys-31/Cys-43 and Cys-62/Cys-148. His-75 serves as the catalytic Proton acceptor. The Ca(2+) site is built by Asp-76, Gly-94, Asp-96, and Ser-98. His-204 contributes to the heme b binding site. Ca(2+) contacts are provided by Ser-205, Asp-222, Thr-224, Ile-227, and Asp-229. The cysteines at positions 277 and 345 are disulfide-linked. A glycan (N-linked (GlcNAc...) asparagine) is linked at Asn-285. Low complexity predominate over residues 350–361; the sequence is FPTLTTLPGPET. The disordered stretch occupies residues 350 to 372; it reads FPTLTTLPGPETSVQRIPPPPGA.

Belongs to the peroxidase family. Ligninase subfamily. Heme b serves as cofactor. It depends on Ca(2+) as a cofactor.

It carries out the reaction 1-(3,4-dimethoxyphenyl)-2-(2-methoxyphenoxy)propane-1,3-diol + H2O2 = 3,4-dimethoxybenzaldehyde + guaiacol + glycolaldehyde + H2O. The enzyme catalyses 2 (3,4-dimethoxyphenyl)methanol + H2O2 = 2 (3,4-dimethoxyphenyl)methanol radical + 2 H2O. It functions in the pathway secondary metabolite metabolism; lignin degradation. Its function is as follows. Depolymerization of lignin. Catalyzes the C(alpha)-C(beta) cleavage of the propyl side chains of lignin. This chain is Ligninase LG3 (GLG3), found in Phanerodontia chrysosporium (White-rot fungus).